The following is a 1250-amino-acid chain: Myosin-1 (1250 aa).

The disordered stretch occupies residues 1-43 (MGHSRRPAGGEKKSRGFGRSKAAADVGDGRQTGGKPQVKKATF). Positions 51-730 (IGVSDLTLLS…TLFALEAMRD (680 aa)) constitute a Myosin motor domain. ATP is bound at residue 144–151 (GESGAGKT). Ser372 is subject to Phosphoserine. The actin-binding stretch occupies residues 419 to 501 (SIGILDIYGF…PGVFAALNDA (83 aa)). 2 IQ domains span residues 734 to 754 (HNMA…RTEC) and 755 to 780 (AIRI…QGHQ). The region spanning 788-978 (RRRMSLLGSR…TIHTGPGEPA (191 aa)) is the TH1 domain. 2 disordered regions span residues 962–1079 (DDSY…PKKP) and 1126–1250 (WTPE…DDDW). A compositionally biased stretch (pro residues) spans 1021–1035 (AAQPLPRATPQPAAP). Residues 1036–1051 (QPAARAVPQPVAAVAA) show a composition bias toward low complexity. 2 stretches are compositionally biased toward pro residues: residues 1064-1077 (APPP…PAPK) and 1139-1151 (TPKP…PPAA). Positions 1076–1137 (PKKPTAKVLY…PEAYLEEQVA (62 aa)) constitute an SH3 domain. The segment covering 1152 to 1170 (PRSTPAPATNGAAAAAKAK) has biased composition (low complexity). Positions 1201-1222 (VSMNSHDSSGGSGRGTPNSMSN) are enriched in polar residues. The span at 1223-1232 (ASLAGGLAEA) shows a compositional bias: low complexity.

This sequence belongs to the TRAFAC class myosin-kinesin ATPase superfamily. Myosin family. Post-translationally, phosphorylation of the TEDS site (Ser-372) is required for the polarization of the actin cytoskeleton. Phosphorylation probably activates the myosin-I ATPase activity.

The protein resides in the cytoplasm. The protein localises to the cytoskeleton. Its subcellular location is the actin patch. Functionally, type-I myosin implicated in the organization of the actin cytoskeleton. Required for proper actin cytoskeleton polarization. At the cell cortex, assembles in patch-like structures together with proteins from the actin-polymerizing machinery and promotes actin assembly. Functions as actin nucleation-promoting factor (NPF) for the Arp2/3 complex. Plays an important role in polarized growth, spore germination, hyphal morphogenesis, and septal wall formation. This chain is Myosin-1 (myoA), found in Neosartorya fischeri (strain ATCC 1020 / DSM 3700 / CBS 544.65 / FGSC A1164 / JCM 1740 / NRRL 181 / WB 181) (Aspergillus fischerianus).